Reading from the N-terminus, the 284-residue chain is 2-dehydro-3-deoxyphosphooctonate aldolase (284 aa).

It belongs to the KdsA family.

It is found in the cytoplasm. It carries out the reaction D-arabinose 5-phosphate + phosphoenolpyruvate + H2O = 3-deoxy-alpha-D-manno-2-octulosonate-8-phosphate + phosphate. It participates in carbohydrate biosynthesis; 3-deoxy-D-manno-octulosonate biosynthesis; 3-deoxy-D-manno-octulosonate from D-ribulose 5-phosphate: step 2/3. The protein operates within bacterial outer membrane biogenesis; lipopolysaccharide biosynthesis. This is 2-dehydro-3-deoxyphosphooctonate aldolase from Paraburkholderia phymatum (strain DSM 17167 / CIP 108236 / LMG 21445 / STM815) (Burkholderia phymatum).